We begin with the raw amino-acid sequence, 122 residues long: uncharacterized protein (122 aa).

Over residues 1 to 15 (MAEPGGRGDYRKDGR) the composition is skewed to basic and acidic residues. The segment at 1–49 (MAEPGGRGDYRKDGRLPSLSRSPLSTTLGTSPACGLEIPPTSGARPDGS) is disordered. A compositionally biased stretch (low complexity) spans 16–32 (LPSLSRSPLSTTLGTSP).

This is an uncharacterized protein from Homo sapiens (Human).